The chain runs to 270 residues: Glucosamine-6-phosphate deaminase (270 aa).

D72 acts as the Proton acceptor; for enolization step in catalysis. D141 acts as the For ring-opening step in catalysis. The active-site Proton acceptor; for ring-opening step is the H143. Catalysis depends on E148, which acts as the For ring-opening step.

This sequence belongs to the glucosamine/galactosamine-6-phosphate isomerase family. NagB subfamily.

It carries out the reaction alpha-D-glucosamine 6-phosphate + H2O = beta-D-fructose 6-phosphate + NH4(+). It participates in amino-sugar metabolism; N-acetylneuraminate degradation; D-fructose 6-phosphate from N-acetylneuraminate: step 5/5. Its activity is regulated as follows. Allosterically activated by N-acetylglucosamine 6-phosphate (GlcNAc6P). Catalyzes the reversible isomerization-deamination of glucosamine 6-phosphate (GlcN6P) to form fructose 6-phosphate (Fru6P) and ammonium ion. The protein is Glucosamine-6-phosphate deaminase of Treponema denticola (strain ATCC 35405 / DSM 14222 / CIP 103919 / JCM 8153 / KCTC 15104).